The primary structure comprises 796 residues: Histone-lysine N-methyltransferase PRDM9 (796 aa).

A disordered region spans residues 1–23; it reads MSRTMNTNKPEENSTEGDAGKLE. The KRAB-related domain occupies 27–90; sequence KVKDEFKDIS…QRQAIKPQIN (64 aa). A disordered region spans residues 149–172; that stretch reads SEHAQKPVCSPEEGNTSGQHFGKK. Zn(2+)-binding residues include Cys-209, Cys-212, Cys-220, and His-223. The region spanning 248 to 362 is the SET domain; it reads PGLRIGPSGI…PGRELLVWYG (115 aa). S-adenosyl-L-methionine-binding positions include 260-262, Tyr-295, and 324-325; these read AGL and NC. 292 to 298 contributes to the substrate binding site; sequence NSGYSWL. Tyr-361 serves as a coordination point for substrate. The residue at position 372 (Lys-372) is an N6,N6,N6-trimethyllysine; alternate. Lys-372 carries the N6-methyllysine; alternate modification. An N6-methyllysine mark is found at Lys-376 and Lys-378. The C2H2-type 1 zinc-finger motif lies at 392-415; it reads HPCFLCSLAFSSQKFLTQHVEWNH. The Zn(2+) site is built by Cys-394, Cys-397, His-410, and His-415. A compositionally biased stretch (basic and acidic residues) spans 443-457; it reads FDSQNKNDKASNEVK. A disordered region spans residues 443-497; the sequence is FDSQNKNDKASNEVKRKSKPRHKWTRQRISTAFSSTLKEQMRSEESKRTVEEELR. The segment covering 458 to 468 has biased composition (basic residues); it reads RKSKPRHKWTR. Polar residues predominate over residues 469 to 480; that stretch reads QRISTAFSSTLK. Over residues 481-497 the composition is skewed to basic and acidic residues; sequence EQMRSEESKRTVEEELR. The C2H2-type 2; degenerate zinc finger occupies 522–540; sequence QCGQCFSDKSNVSEHQRTH. 9 C2H2-type zinc fingers span residues 546 to 568, 574 to 596, 602 to 624, 630 to 652, 658 to 680, 686 to 708, 714 to 736, 742 to 764, and 770 to 792; these read YICRECGRGFSQKSDLIKHQRTH, YICRECGRGFTQKSDLIKHQRTH, YICRECGRGFTQKSSLIRHQRTH, YICRECGLGFTQKSNLIRHLRTH, YICRECGLGFTRKSNLIQHQRTH, YICRECGQGLTWKSSLIQHQRTH, and YICRECGRGFTWKSSLIQHQRTH. Positions 716, 719, 732, 736, 744, 747, 760, 764, 772, 775, 788, and 792 each coordinate Zn(2+).

Belongs to the class V-like SAM-binding methyltransferase superfamily. In terms of assembly, homodimer. Interacts with EHMT2 and CDYL; interaction only takes place when PRDM9 is bound to hotspot DNA. Interacts with CXXC1; this interaction does not link PRDM9-activated recombination hotspot sites with DSB machinery and is not required for the hotspot recognition pathway. Forms a complex with EWSR1, REC8, SYCP3 and SYCP1; complex formation is dependent of phosphorylated form of REC8 and requires PRDM9 bound to hotspot DNA; EWSR1 joins PRDM9 with the chromosomal axis through REC8. In terms of processing, mono-methylated; automethylated. Tri-methylated; automethylated. Mono-methylation is predominant; automethylation is lower and slower than H3 peptide methylation and is in a highest S-adenosyl-L-methionine concentration-dependent. There are two major sites for automethylation at Lys-372 and Lys-378. Lysines can be simultaneously methylated, such as Lys-372(me3)/Lys-376(me1), Lys-372(me1)/Lys-378(me1) and Lys-372(me1)/Lys-376(me1)/Lys-378(me1). Automethylation is an intramolecular (cis) process.

Its subcellular location is the nucleus. The protein localises to the chromosome. The catalysed reaction is L-lysyl-[protein] + S-adenosyl-L-methionine = N(6)-methyl-L-lysyl-[protein] + S-adenosyl-L-homocysteine + H(+). The enzyme catalyses N(6)-methyl-L-lysyl-[protein] + S-adenosyl-L-methionine = N(6),N(6)-dimethyl-L-lysyl-[protein] + S-adenosyl-L-homocysteine + H(+). It carries out the reaction L-lysyl(4)-[histone H3] + 3 S-adenosyl-L-methionine = N(6),N(6),N(6)-trimethyl-L-lysyl(4)-[histone H3] + 3 S-adenosyl-L-homocysteine + 3 H(+). It catalyses the reaction L-lysyl(36)-[histone H3] + 3 S-adenosyl-L-methionine = N(6),N(6),N(6)-trimethyl-L-lysyl(36)-[histone H3] + 3 S-adenosyl-L-homocysteine + 3 H(+). The catalysed reaction is L-lysyl(9)-[histone H3] + 3 S-adenosyl-L-methionine = N(6),N(6),N(6)-trimethyl-L-lysyl(9)-[histone H3] + 3 S-adenosyl-L-homocysteine + 3 H(+). The enzyme catalyses L-lysyl(20)-[histone H4] + S-adenosyl-L-methionine = N(6)-methyl-L-lysyl(20)-[histone H4] + S-adenosyl-L-homocysteine + H(+). It carries out the reaction N(6)-methyl-L-lysyl(20)-[histone H4] + S-adenosyl-L-methionine = N(6),N(6)-dimethyl-L-lysyl(20)-[histone H4] + S-adenosyl-L-homocysteine + H(+). Functionally, histone methyltransferase that sequentially mono-, di-, and tri-methylates both 'Lys-4' (H3K4) and 'Lys-36' (H3K36) of histone H3 to produce respectively trimethylated 'Lys-4' (H3K4me3) and trimethylated 'Lys-36' (H3K36me3) histone H3 and plays a key role in meiotic prophase by determining hotspot localization thereby promoting meiotic recombination. Can also methylate all four core histones with H3 being the best substrate and the most highly modified. Is also able, on one hand, to mono and di-methylate H4K20 and on other hand to trimethylate H3K9 with the di-methylated H3K9 as the best substrate. During meiotic prophase, binds specific DNA sequences through its zinc finger domains thereby determining hotspot localization where it promotes local H3K4me3 and H3K36me3 enrichment on the same nucleosomes through its histone methyltransferase activity. Thereby promotes double-stranded breaks (DSB) formation, at this subset of PRDM9-binding sites, that initiates meiotic recombination for the proper meiotic progression. During meiotic progression hotspot-bound PRDM9 interacts with several complexes; in early leptonema binds CDYL and EHMT2 followed by EWSR1 and CXXC1 by the end of leptonema. EWSR1 joins PRDM9 with the chromosomal axis through REC8. In this way, controls the DSB repair pathway, pairing of homologous chromosomes and sex body formation. Moreover plays a central role in the transcriptional activation of genes during early meiotic prophase thanks to H3K4me3 and H3K36me3 enrichment that represents a specific tag for epigenetic transcriptional activation. In addition performs automethylation. Acetylation and phosphorylation of histone H3 attenuate or prevent histone H3 methylation. This Rattus norvegicus (Rat) protein is Histone-lysine N-methyltransferase PRDM9.